The chain runs to 651 residues: MGKKHKKHKSDRHFYEEYVEKPLKLVLKVGGSEVTELSTGSSGHDSSLFEDRSDHDKHKDRKRKKRKKGEKQAPGEEKGRKRRRVKEDKKKRDRDRAENEVDRDLQCHVPIRLDLPPEKPLTSSLAKQEEVEQTPLQEALNQLMRQLQRKDPSAFFSFPVTDFIAPGYSMIIKHPMDFSTMKEKIKNNDYQSIEELKDNFKLMCTNAMIYNKPETIYYKAAKKLLHSGMKILSQERIQSLKQSIDFMSDLQKTRKQKERTDACQSGEDSGCWQREREDSGDAETQAFRSPAKDNKRKDKDVLEDKWRSSNSEREHEQIERVVQESGGKLTRRLANSQCEFERRKPDGTTTLGLLHPVDPIVGEPGYCPVRLGMTTGRLQSGVNTLQGFKEDKRNRVTPVLYLNYGPYSSYAPHYDSTFANISKDDSDLIYSTYGEDSDLPNNFSISEFLATCQDYPYVMADSLLDVLTKGGHSRSLQDLDMSSPEDEGQTRALDTAKEAEITQIEPTGRLESSSQDRLTALQAVTTFGAPAEVFDSEEAEVFQRKLDETTRLLRELQEAQNERLSTRPPPNMICLLGPSYREMYLAEQVTNNLKELTQQVTPGDVVSIHGVRKAMGISVPSPIVGNSFVDLTGECEEPKETSTAECGPDAS.

A Glycyl lysine isopeptide (Lys-Gly) (interchain with G-Cter in SUMO2) cross-link involves residue Lys-21. Residues 34 to 103 are disordered; that stretch reads VTELSTGSSG…RDRAENEVDR (70 aa). The span at 35 to 45 shows a compositional bias: polar residues; it reads TELSTGSSGHD. The segment covering 47–57 has biased composition (basic and acidic residues); that stretch reads SLFEDRSDHDK. Positions 58-69 are enriched in basic residues; sequence HKDRKRKKRKKG. The Nuclear localization signal signature appears at 65-96; it reads KRKKGEKQAPGEEKGRKRRRVKEDKKKRDRDR. The span at 70-103 shows a compositional bias: basic and acidic residues; sequence EKQAPGEEKGRKRRRVKEDKKKRDRDRAENEVDR. Residues Lys-127, Lys-186, Lys-197, Lys-201, Lys-212, and Lys-241 each participate in a glycyl lysine isopeptide (Lys-Gly) (interchain with G-Cter in SUMO2) cross-link. The Bromo domain occupies 131-235; sequence VEQTPLQEAL…HSGMKILSQE (105 aa). Positions 252–316 are disordered; that stretch reads KTRKQKERTD…RSSNSEREHE (65 aa). Phosphoserine occurs at positions 279 and 289. Positions 290-316 are enriched in basic and acidic residues; the sequence is PAKDNKRKDKDVLEDKWRSSNSEREHE. Lys-305 is covalently cross-linked (Glycyl lysine isopeptide (Lys-Gly) (interchain with G-Cter in SUMO2)). At Lys-328 the chain carries N6-acetyllysine. Lys-344 participates in a covalent cross-link: Glycyl lysine isopeptide (Lys-Gly) (interchain with G-Cter in SUMO2). Ser-380 bears the Phosphoserine mark. Lys-389 is covalently cross-linked (Glycyl lysine isopeptide (Lys-Gly) (interchain with G-Cter in SUMO2)). Ser-475, Ser-482, and Ser-483 each carry phosphoserine. The stretch at 536–567 forms a coiled coil; the sequence is SEEAEVFQRKLDETTRLLRELQEAQNERLSTR. Residue Ser-621 is modified to Phosphoserine.

Interacts with IRF2 and HNRPUL1. Interacts (via N-terminus) with TP53. Interacts (via C-terminus) with EP300. Interacts with BRCA1. Interacts (via bromo domain) with histone H3 (via N-terminus) acetylated at 'Lys-14' (H3K14ac). Has low affinity for histone H3 acetylated at 'Lys-9' (H3K9ac). Has the highest affinity for histone H3 that is acetylated both at 'Lys-9' (H3K9ac) and at 'Lys-14' (H3K14ac). Has very low affinity for non-acetylated histone H3. Interacts (via bromo domain) with histone H4 (via N-terminus) acetylated at 'Lys-8' (H3K8ac) (in vitro). Interacts with TRIM24, PTPN13 and DVL1. Identified in a complex with SMARCA4/BRG1, SMARCC1/BAF155, SMARCE1/BAF57, DPF2/BAF45D and ARID2, subunits of the SWI/SNF-B (PBAF) chromatin remodeling complex. In terms of tissue distribution, ubiquitous.

It localises to the nucleus. The protein localises to the chromosome. Its function is as follows. Acts both as coactivator and as corepressor. May play a role in chromatin remodeling. Transcriptional corepressor that down-regulates the expression of target genes. Binds to target promoters, leading to increased histone H3 acetylation at 'Lys-9' (H3K9ac). Binds to the ESR1 promoter. Recruits BRCA1 and POU2F1 to the ESR1 promoter. Coactivator for TP53-mediated activation of transcription of a set of target genes. Required for TP53-mediated cell-cycle arrest in response to oncogene activation. Promotes acetylation of TP53 at 'Lys-382', and thereby promotes efficient recruitment of TP53 to target promoters. Inhibits cell cycle progression from G1 to S phase. Activator of the Wnt signaling pathway in a DVL1-dependent manner by negatively regulating the GSK3B phosphotransferase activity. Induces dephosphorylation of GSK3B at 'Tyr-216'. Down-regulates TRIM24-mediated activation of transcriptional activation by AR. This chain is Bromodomain-containing protein 7 (Brd7), found in Mus musculus (Mouse).